A 472-amino-acid chain; its full sequence is Karilysin (472 aa).

An N-terminal signal peptide occupies residues 1-20 (MKRFILLFFLSTIAIFKVYS). The propeptide at 21 to 34 (QRLYDNGPLTGDNN) is activation peptide. 5 residues coordinate Zn(2+): His102, Asp104, His117, His133, and His155. Residue Glu156 is the Proton donor/acceptor of the active site. His159 and His165 together coordinate Zn(2+). Residues 196-386 (YGYPFSISGP…AVSCSRTISP (191 aa)) constitute a propeptide, removed in short form. The propeptide at 387 to 472 (FTLSPNPATD…QTYTQKLIKK (86 aa)) is removed in long form.

It belongs to the peptidase M10A family. Requires Zn(2+) as cofactor. Processes itself into the mature 18-kDa enzyme (Kly18) through sequential autoproteolytic cleavage at both the N- and C-termini. However, the maturation intermediate Kly38 is found to be more active than Kly18 and the rate for its processing is slow, which raises the question as to whether Kly38 is a physiologically relevant entity.

The protein resides in the secreted. Its activity is regulated as follows. Autoprocessing and proteolytic activity are completely inhibited by EDTA and 1,10-phenanthroline in vitro. Proteolytic activity is 3-fold enhanced by Ca(2+) due to stabilization of the protein structure but inhibited by an excess of Zn(2+). Inhibitory studies of karilysin identified several phage display-selected peptides with apparent inhibition constants (Ki) in the micromolar range, among which is the tetrapeptide SWFP (Ki=10.7 uM). Its function is as follows. Metalloprotease able to cleave casein, gelatin, elastin, fibrinogen and fibronectin. Shows exclusive preference for hydrophobic residues, especially Leu, Tyr and Met, at the P1' position of substrates, and for Pro or Ala at P3. Can efficiently cleave the antimicrobial peptide LL-37 which is a component of the immune system, leading to a significant reduction of its bactericidal activity. Is also able to inhibit all pathways of the human complement system. The classical and lectin complement pathways are inhibited because of the efficient degradation of mannose-binding lectin, ficolin-2, ficolin-3, and C4 by karilysin, whereas inhibition of the terminal pathway is caused by cleavage of C5. Thus, karilysin appears to be a major virulence factor of T.forsythia that contributes to evasion of the human immune response and periodontal disease. Seems to act synergistically with gingipains from the periodontal pathogen P.gingivalis present at the same sites of infection. The protein is Karilysin (kly) of Tannerella forsythia (strain ATCC 43037 / JCM 10827 / CCUG 21028 A / KCTC 5666 / FDC 338) (Bacteroides forsythus).